We begin with the raw amino-acid sequence, 250 residues long: Probable replication-associated protein repA2 (250 aa).

The protein belongs to the IncFII RepA family.

Its function is as follows. This protein is essential for plasmid replication; it is involved in copy control functions. The polypeptide is Probable replication-associated protein repA2 (repA2) (Buchnera aphidicola subsp. Acyrthosiphon pisum (strain APS) (Acyrthosiphon pisum symbiotic bacterium)).